We begin with the raw amino-acid sequence, 531 residues long: Ultra-long-chain fatty acid omega-hydroxylase (531 aa).

The Lumenal portion of the chain corresponds to 1–22 (MLPITDRLLHLLGLEKTAFRIY). A helical transmembrane segment spans residues 23 to 43 (AVSTLLLFLLFFLFRLLLRFL). Over 44–531 (RLCRSFYITC…LKVEPLPPRA (488 aa)) the chain is Cytoplasmic. Heme-binding residues include Glu-335 and Cys-475.

Belongs to the cytochrome P450 family. Requires heme as cofactor.

It localises to the endoplasmic reticulum membrane. The protein localises to the microsome membrane. It carries out the reaction triacontanoate + reduced [NADPH--hemoprotein reductase] + O2 = omega-hydroxy-triacontanoate + oxidized [NADPH--hemoprotein reductase] + H2O + H(+). It catalyses the reaction an omega-methyl-ultra-long-chain fatty acid + reduced [NADPH--hemoprotein reductase] + O2 = an omega-hydroxy-ultra-long-chain fatty acid + oxidized [NADPH--hemoprotein reductase] + H2O + H(+). Functionally, a cytochrome P450 monooxygenase involved in epidermal ceramide biosynthesis. Hydroxylates the terminal carbon (omega-hydroxylation) of ultra-long-chain fatty acyls (C28-C36) prior to ceramide synthesis. Contributes to the synthesis of three classes of omega-hydroxy-ultra-long chain fatty acylceramides having sphingosine, 6-hydroxysphingosine and phytosphingosine bases, all major lipid components that underlie the permeability barrier of the stratum corneum. Mechanistically, uses molecular oxygen inserting one oxygen atom into a substrate, and reducing the second into a water molecule, with two electrons provided by NADPH via cytochrome P450 reductase (CPR; NADPH-ferrihemoprotein reductase). The chain is Ultra-long-chain fatty acid omega-hydroxylase from Homo sapiens (Human).